The sequence spans 231 residues: Modulator of macroautophagy TMEM150B-B (231 aa).

M1 is a topological domain (cytoplasmic). A helical membrane pass occupies residues 2-22 (WAWALLPICLTVWATGGIWIV). Residues 23–50 (YAMSVSNGSVNLSDGFPYISVSGTYPPQ) lie on the Extracellular side of the membrane. 2 N-linked (GlcNAc...) asparagine glycosylation sites follow: N29 and N33. Residues 51–71 (SCVFGQVLNVGAMLAVWISVI) form a helical membrane-spanning segment. Over 72-83 (RFQQIRDYNCHS) the chain is Cytoplasmic. A helical transmembrane segment spans residues 84 to 104 (VLNSVSLATGILCALGTSIVG). The Extracellular segment spans residues 105 to 115 (NFQQSNQLQTH). The chain crosses the membrane as a helical span at residues 116-136 (LAGAFLAFIIGNVYFWMQTAL). Residues 137 to 150 (TYMVKPKHGGCYIG) lie on the Cytoplasmic side of the membrane. A helical transmembrane segment spans residues 151-171 (PIRFCLSIACTALIVAMAVFL). Residues 172-183 (KMNMKSVSAICE) are Extracellular-facing. Residues 184–204 (WIVAMILFLLYGLFAVDFWHL) form a helical membrane-spanning segment. At 205-231 (DGHFFHVKKRRTVIPNEMEVSTVTLSI) the chain is on the cytoplasmic side.

The protein belongs to the DRAM/TMEM150 family.

Its subcellular location is the cell membrane. It is found in the endosome membrane. The protein resides in the cytoplasmic vesicle. The protein localises to the autophagosome membrane. Its function is as follows. Modulator of macroautophagy that causes accumulation of autophagosomes under basal conditions and enhances autophagic flux. Represses cell death and promotes long-term clonogenic survival of cells grown in the absence of glucose in a macroautophagy-independent manner. May have some role in extracellular matrix engulfment or growth factor receptor recycling, both of which can modulate cell survival. In Xenopus laevis (African clawed frog), this protein is Modulator of macroautophagy TMEM150B-B.